Consider the following 312-residue polypeptide: Serine/threonine-protein kinase ppk11 (312 aa).

Positions 6–258 constitute a Protein kinase domain; it reads YRDLQLIGQG…AEYLSKHKFI (253 aa). Residues 12-20 and Lys35 contribute to the ATP site; that span reads IGQGSFGSV. Residue Asp127 is the Proton acceptor of the active site.

Belongs to the protein kinase superfamily. Ser/Thr protein kinase family.

The protein localises to the cytoplasm. It localises to the nucleus. It catalyses the reaction L-seryl-[protein] + ATP = O-phospho-L-seryl-[protein] + ADP + H(+). The enzyme catalyses L-threonyl-[protein] + ATP = O-phospho-L-threonyl-[protein] + ADP + H(+). The protein is Serine/threonine-protein kinase ppk11 (ppk11) of Schizosaccharomyces pombe (strain 972 / ATCC 24843) (Fission yeast).